The chain runs to 347 residues: Sensor protein VraS (347 aa).

2 helical membrane passes run Ile13 to Ile33 and Ile43 to Val63. The Histidine kinase domain maps to Arg150–Lys341. His156 bears the Phosphohistidine mark.

Autophosphorylated on His-156.

The protein resides in the cell membrane. The enzyme catalyses ATP + protein L-histidine = ADP + protein N-phospho-L-histidine.. Functionally, member of the two-component regulatory system PprA/PprB involved in biofilm formation by controlling the expression of many related genes including type IVb pili major subunit flp pilin, adhesin bapA or cupE fimbriae. Also modulates quorum-sensing signal production acting on both negative and positive modulators. Functions as a heme sensor histidine kinase which is autophosphorylated at a histidine residue and transfers its phosphate group to PprB. This is Sensor protein VraS (vraS) from Staphylococcus aureus (strain Mu3 / ATCC 700698).